We begin with the raw amino-acid sequence, 439 residues long: Xaa-Pro dipeptidase (439 aa).

5 residues coordinate Mn(2+): D244, D255, H335, E380, and E419.

It belongs to the peptidase M24B family. Bacterial-type prolidase subfamily. Mn(2+) is required as a cofactor.

The enzyme catalyses Xaa-L-Pro dipeptide + H2O = an L-alpha-amino acid + L-proline. Its function is as follows. Splits dipeptides with a prolyl residue in the C-terminal position. This is Xaa-Pro dipeptidase from Shewanella sp. (strain MR-7).